A 215-amino-acid chain; its full sequence is MKYELTATEARVIGCLLEKQVTTPEQYPLSVNGVVTACNQKTNREPVMNLTEQEVQEQLDNLVKRHFLRTVSGFGNRVTKYEQRFCNSEFGDLKLSAAEVALVTTLLLRGAQTPGELRSRASRMHEFSDMAEVESTLERLASREDGPYVIRLAREPGKRESRYMHLFCGDVDELSLQTSAPESASGDLQSRVEALESEVAELKQRLDSLLAHLGE.

It belongs to the UPF0502 family.

The chain is UPF0502 protein YceH from Salmonella schwarzengrund (strain CVM19633).